The chain runs to 143 residues: Transcription antitermination protein NusB (143 aa).

This sequence belongs to the NusB family.

Its function is as follows. Involved in transcription antitermination. Required for transcription of ribosomal RNA (rRNA) genes. Binds specifically to the boxA antiterminator sequence of the ribosomal RNA (rrn) operons. This Anaeromyxobacter sp. (strain Fw109-5) protein is Transcription antitermination protein NusB.